The primary structure comprises 382 residues: 3-phytase (382 aa).

The signal sequence occupies residues 1 to 26; sequence MKVPKTMLLSTAAGLLLSLTATSVSA. In terms of domain architecture, BPP spans 27-361; the sequence is HYVNEEHHFK…VSWEQIAQHL (335 aa).

The protein resides in the secreted. The catalysed reaction is 1D-myo-inositol hexakisphosphate + H2O = 1D-myo-inositol 1,2,4,5,6-pentakisphosphate + phosphate. The sequence is that of 3-phytase (phy) from Bacillus subtilis (strain 168).